The chain runs to 293 residues: Aquaporin-6 (293 aa).

Topologically, residues 1 to 22 (MEPGLCSRAYLLVGGLWTAISK) are cytoplasmic. Residues 23–43 (ALFAEFLATGLYVFFGVGSVL) form a helical membrane-spanning segment. The Extracellular portion of the chain corresponds to 44 to 51 (PWPVALPS). A helical transmembrane segment spans residues 52–70 (VLQIAITFNLATATAVQIS). The Cytoplasmic portion of the chain corresponds to 71–75 (WKTSG). Residues 76–85 (AHANPAVTLA) constitute an intramembrane region (discontinuously helical). The NPA 1 signature appears at 79-81 (NPA). The Cytoplasmic portion of the chain corresponds to 86 to 96 (YLVGSHISLPR). The helical transmembrane segment at 97-118 (AMAYIAAQLAGATAGAALLYGV) threads the bilayer. Residues 119–138 (TPGGIRETLGVNVVHNSTST) are Extracellular-facing. Asn-134 carries N-linked (GlcNAc...) asparagine glycosylation. A helical membrane pass occupies residues 139–159 (GQAVAVELVLTLQLVLCVFAS). Over 160–165 (MDGRQT) the chain is Cytoplasmic. Residues 166 to 185 (LASPAAMIGTSVALGHLIGI) form a helical membrane-spanning segment. Residues 186-189 (YFTG) lie on the Extracellular side of the membrane. The segment at residues 190-202 (CSMNPARSFGPAV) is an intramembrane region (discontinuously helical). The NPA 2 signature appears at 193–195 (NPA). The Extracellular segment spans residues 203–210 (IVGKFAVH). Residues 211–231 (WIFWVGPLTGAVLASLIYNFI) form a helical membrane-spanning segment. Over 232-293 (LFPDTKTVAQ…RSFSFTLGLC (62 aa)) the chain is Cytoplasmic.

It belongs to the MIP/aquaporin (TC 1.A.8) family. Homotetramer; each monomer provides an independent solute pore.

It localises to the cytoplasmic vesicle membrane. The enzyme catalyses nitrate(in) = nitrate(out). It carries out the reaction iodide(out) = iodide(in). The catalysed reaction is bromide(in) = bromide(out). It catalyses the reaction chloride(in) = chloride(out). The enzyme catalyses Na(+)(in) = Na(+)(out). It carries out the reaction H2O(in) = H2O(out). The catalysed reaction is CO2(out) = CO2(in). It catalyses the reaction NH4(+)(in) = NH4(+)(out). In terms of biological role, aquaporins form homotetrameric transmembrane channels, with each monomer independently mediating water transport across the plasma membrane along its osmotic gradient. Unlike classical aquaporins, AQP6 is an intracellular channel with selective anion permeability, particularly for nitrate, and exhibits very low water permeability. It may also facilitate the transport of gases, such as CO2 and NH4(+), as demonstrated in vitro. In Mus musculus (Mouse), this protein is Aquaporin-6.